The following is a 1554-amino-acid chain: MDSCCVSVNNKTHFNDSTSSSDAADVLIHSTRAGRDEIQDKSQNKVNIYIRRLSDSEHVHSADERRTEIPPVNLPTASDTAGPEEPLAGIKSNQFAGLFGKTSRKEKSKAQSTIMQTEQLKSKGEDVQISTFSADGRGVVSAALRKRSQGAPIRRNVTVQVLDQDRSQTPAGVQPDPAFPLGDPGTSASVAAITAATLAATAPLMKAQSEMEAQISRVSAELKRLQAAEGSVPPGRTARTDSSSAGRAAHLEEQLNILIQQRLQHLETIQCQQIQLQNRLLGSALDVVASRGNSSGVSQTDSLPLQISGNRSIRLSATDNPSAGRPASVSMDVYRERQTGGHKSPLETPAPRKVIPKPTHWTSSTSTNRPPKSSFKNQGNGRLQDQSPNNRRSPERCALQSVGVERFAMATADNSQPEQSRESQMPSKASVTRSAQEDGSSFVNGQNEQERQGEPTNVSSSSTTVQKASEMLQDLGRLKNEMRSLLQTADAFPVPNAKSTQSSRSRHLAPVATAPPPATAPISMPPEPVDVIAVRAAALNRASVLKSIQPPTSMFEDAGLVLRQVRQSKKTLEENLEAILRAKDGEVLHTQLEALSKNRDVREELRIKKTVDAWINTLSKEIQDDLARESSERIVDAAVSRREAGQRTRAEASAAAKKTSVRAQAGNTRAHTRQPAPAVRNKPAVKQEATQPIVLKSQDDEEYLARLYGKAIYDGQRRTLKKSPYLRFNSPTPKSKPQRPKIVETVKGVKMKSSKTQTSQYVGDVSAMQHSVSEPHFIFSPSDPDKQQQQPGSPVRGYLIPMAIPLGKPRVDCQPPVPSRVIITDKPAIVTTSFPPITVVESKPTPAIRKPNAILLEVQSAPKKRTPQLQIQVQPGVNIESALCSSRQASPTPVIPAESILPPPSIHATEDPHAHEDQQENIFPGTNFLAQADISQETNGGLPDSPIEFKGLPSPPADLYHGPVFPPVPTQSTPLTEPILNTIQQRETLENRLVDWVEQQIMARVITGMFPQPAQADPVHQSEPENSVASDIVEAAGGSGLQLFVDTGVPVDSEVIRHYVNEVLTEIIASMLGQREAQGTPATLVQTQDAQKEDTTVPTPAPTPEPSLKDPPSPVRTPDLSEHLSTATSPEKPPQESASPGPDRIPVGTPITTPIPSPTRVATPSPPTPANQSPEPGSLQIHLWEGSELPLEEEEQPELQPAPVVISVPRVDDQEESVIHPSSPVLSKPQSPPAPPLPPVIQKSESSSSSSSSSSESSCSSSVTVTETETAARHISEGELLLNHGQMAAVRVLEQEGVLLPNFMTSLNGSLHGVQDMDYDPPSEGQVIRAPHLPAHHDPVLSLLARMELGPISQSQQPEGWWEEESSGEVSEGQRPVLTAAEEIVLTGHSLMDQQTIRQSRNTQISPHATLTSPGQVIAEHTGAVVEDGGLSVNLRSSDEQKEAMVYQADTVSSPQPESSQMAQTVHRPAPILVRQYEEEPDFPQLRRLSDDAFFGADEKGEDTFLHTGEGGGGGRGSDVRVMSVRLPSVKQDQESVSLSSVEGDTDSSANDVF.

The segment covering 57 to 68 (EHVHSADERRTE) has biased composition (basic and acidic residues). 5 disordered regions span residues 57–84 (EHVHSADERRTEIPPVNLPTASDTAGPE), 227–247 (AAEGSVPPGRTARTDSSSAGR), 312–396 (SIRL…SPER), 411–466 (TADN…TTVQ), and 489–523 (ADAFPVPNAKSTQSSRSRHLAPVATAPPPATAPIS). Residues 204–270 (LMKAQSEMEA…QRLQHLETIQ (67 aa)) are a coiled coil. 4 stretches are compositionally biased toward polar residues: residues 312–321 (SIRLSATDNP), 360–391 (HWTSSTSTNRPPKSSFKNQGNGRLQDQSPNNR), 412–447 (ADNSQPEQSRESQMPSKASVTRSAQEDGSSFVNGQN), and 454–466 (EPTNVSSSSTTVQ). Positions 513-523 (TAPPPATAPIS) are enriched in pro residues. The segment at 553–639 (SMFEDAGLVL…SSERIVDAAV (87 aa)) is required for centrosomal localization. Residues 556 to 586 (EDAGLVLRQVRQSKKTLEENLEAILRAKDGE) are a coiled coil. Basic and acidic residues predominate over residues 639 to 650 (VSRREAGQRTRA). Disordered stretches follow at residues 639–687 (VSRR…AVKQ), 1079–1178 (GTPA…EPGS), 1214–1265 (QEES…SVTV), 1354–1374 (QSQQPEGWWEEESSGEVSEGQ), and 1500–1554 (KGED…NDVF). Positions 1080-1089 (TPATLVQTQD) are enriched in polar residues. Composition is skewed to pro residues over residues 1099–1115 (TPAPTPEPSLKDPPSPV) and 1230–1239 (QSPPAPPLPP). Over residues 1240-1265 (VIQKSESSSSSSSSSSESSCSSSVTV) the composition is skewed to low complexity. A compositionally biased stretch (polar residues) spans 1535–1554 (ESVSLSSVEGDTDSSANDVF).

Belongs to the TALPID3 family.

It localises to the cytoplasm. The protein resides in the cytoskeleton. The protein localises to the cilium basal body. It is found in the microtubule organizing center. Its subcellular location is the centrosome. It localises to the centriole. Its function is as follows. Required for ciliogenesis and sonic hedgehog/SHH signaling. This is Protein TALPID3 (talpid3) from Danio rerio (Zebrafish).